The following is a 2512-amino-acid chain: Probable polyketide synthase 5 (2512 aa).

Residues 17–447 enclose the Ketosynthase family 3 (KS3) domain; that stretch reads MKGVAIVGIG…GSNCCLLISE (431 aa). Catalysis depends on for beta-ketoacyl synthase activity residues Cys-187, His-329, and His-368. Residues 638–671 are acyl/malonyl transferase; the sequence is GVNPSFILGHSLGEIPTSYCSGMIDLDTFCYTVY. The active-site For acyl/malonyl transferase activity is the Ser-648. The interval 928 to 1050 is N-terminal hotdog fold; that stretch reads IDHLGLSNSY…ANFQLLDHTI (123 aa). The PKS/mFAS DH domain maps to 928–1210; sequence IDHLGLSNSY…SKSLIPIKEL (283 aa). The Proton acceptor; for dehydratase activity role is filled by His-962. The C-terminal hotdog fold stretch occupies residues 1067–1210; that stretch reads TLARLTKNEI…SKSLIPIKEL (144 aa). The active-site Proton donor; for dehydratase activity is Asp-1125. The Carrier domain occupies 2430–2507; the sequence is AGSKNVDELF…VSIKIILNFL (78 aa). Ser-2467 carries the post-translational modification O-(pantetheine 4'-phosphoryl)serine.

The cofactor is pantetheine 4'-phosphate.

In terms of biological role, probable polyketide synthase. The sequence is that of Probable polyketide synthase 5 (pks5) from Dictyostelium discoideum (Social amoeba).